A 696-amino-acid chain; its full sequence is Chitin synthase regulator SKT5 (696 aa).

Disordered stretches follow at residues 37–67 and 90–145; these read GQDF…SANQ and QEED…IKKR. Basic and acidic residues predominate over residues 41-53; that stretch reads SDNKENRENRDNE. Over residues 104–126 the composition is skewed to low complexity; it reads LNNSNNTSLSSLGSTPTNSPSPG. Residues 129-139 are compositionally biased toward polar residues; the sequence is RQTNSSTSLTK. Ser-148 is subject to Phosphoserine. Sel1-like repeat units lie at residues 271–306, 307–342, 343–382, 386–423, 424–460, 461–498, and 499–534; these read SDAQ…KHGH, IESA…SRNH, PSAM…ARAN, AAAP…SLGH, VPSA…LKGD, SVAM…NAGL, and PKAQ…GNED. Ser-561 and Ser-563 each carry phosphoserine. The residue at position 564 (Thr-564) is a Phosphothreonine. Composition is skewed to polar residues over residues 576–593, 605–634, and 651–661; these read SNVG…TFFT, LQIN…SSAK, and VSLSNMGSSNM. Residues 576-696 are disordered; that stretch reads SNVGSNSRVS…GKKKKDCVIM (121 aa). The segment covering 662 to 675 has biased composition (basic and acidic residues); sequence IRKDFPAVKTESKK. Basic residues predominate over residues 680 to 696; sequence KNKKDKQGKKKKDCVIM. Position 693 is a cysteine methyl ester (Cys-693). The S-farnesyl cysteine moiety is linked to residue Cys-693. Residues 694–696 constitute a propeptide, removed in mature form; the sequence is VIM.

This sequence belongs to the SKT5 family. As to quaternary structure, may interact with CHS3 and seems to be an adapter (along with BNI4) to link CHS3 to septins. Farnesylation is required for chitin synthase CHS3 activity but is not required for SKT5 membrane association.

The protein resides in the cell membrane. In terms of biological role, activator of the chitin synthase CHS3 which polymerizes chitin, a structural polymer of the fungal cell wall. The protein is Chitin synthase regulator SKT5 of Saccharomyces cerevisiae (strain ATCC 204508 / S288c) (Baker's yeast).